Reading from the N-terminus, the 303-residue chain is Dipeptide transport system permease protein DppB (303 aa).

The next 7 membrane-spanning stretches (helical) occupy residues 9 to 29 (LGLL…MMQV), 62 to 82 (YFIY…IYTN), 93 to 113 (LPVS…LGAL), 129 to 149 (IFGF…GTLI), 166 to 186 (GTFS…MAVV), 227 to 247 (IPML…SVLI), and 269 to 289 (FPVI…FILV). The ABC transmembrane type-1 domain maps to 93 to 290 (LPVSMQLGTQ…VILMVFILVT (198 aa)).

The protein belongs to the binding-protein-dependent transport system permease family. OppBC subfamily. As to quaternary structure, the complex is composed of two ATP-binding proteins (DppD and DppF), two transmembrane proteins (DppB and DppC) and a solute-binding protein (DppA).

It localises to the cell membrane. Part of the ABC transporter DppABCDF involved in dipeptide transport. Responsible for the translocation of the substrate across the membrane. This chain is Dipeptide transport system permease protein DppB, found in Lactococcus lactis subsp. cremoris (strain MG1363).